Consider the following 394-residue polypeptide: Elongation factor Tu (394 aa).

The tr-type G domain maps to 10–204; it reads KPHVNIGTIG…AVDSWIPLPE (195 aa). Residues 19–26 form a G1 region; the sequence is GHVDHGKT. 19–26 provides a ligand contact to GTP; it reads GHVDHGKT. Position 26 (Thr26) interacts with Mg(2+). Residues 60 to 64 are G2; it reads GITIN. Residues 81–84 form a G3 region; sequence DCPG. Residues 81–85 and 136–139 each bind GTP; these read DCPGH and NKCD. Residues 136-139 form a G4 region; the sequence is NKCD. Residues 174–176 are G5; sequence SGL.

Belongs to the TRAFAC class translation factor GTPase superfamily. Classic translation factor GTPase family. EF-Tu/EF-1A subfamily. As to quaternary structure, monomer.

The protein resides in the cytoplasm. It catalyses the reaction GTP + H2O = GDP + phosphate + H(+). In terms of biological role, GTP hydrolase that promotes the GTP-dependent binding of aminoacyl-tRNA to the A-site of ribosomes during protein biosynthesis. This chain is Elongation factor Tu, found in Ureaplasma parvum serovar 3 (strain ATCC 27815 / 27 / NCTC 11736).